Consider the following 504-residue polypeptide: Cytochrome P450 2D10 (504 aa).

Residue Ser249 is modified to Phosphoserine. Residue Cys446 participates in heme binding.

This sequence belongs to the cytochrome P450 family. The cofactor is heme.

The protein localises to the endoplasmic reticulum membrane. The protein resides in the microsome membrane. The catalysed reaction is an organic molecule + reduced [NADPH--hemoprotein reductase] + O2 = an alcohol + oxidized [NADPH--hemoprotein reductase] + H2O + H(+). In terms of biological role, cytochromes P450 are a group of heme-thiolate monooxygenases. In liver microsomes, this enzyme is involved in an NADPH-dependent electron transport pathway. It oxidizes a variety of structurally unrelated compounds, including steroids, fatty acids, and xenobiotics. The sequence is that of Cytochrome P450 2D10 (Cyp2d10) from Mus musculus (Mouse).